A 122-amino-acid chain; its full sequence is Small ribosomal subunit protein uS13 (122 aa).

The interval 89 to 122 is disordered; sequence GLRHRRGLPARGQRTKTNARTRKGPRRGVAGKRK.

Belongs to the universal ribosomal protein uS13 family. In terms of assembly, part of the 30S ribosomal subunit. Forms a loose heterodimer with protein S19. Forms two bridges to the 50S subunit in the 70S ribosome.

Functionally, located at the top of the head of the 30S subunit, it contacts several helices of the 16S rRNA. In the 70S ribosome it contacts the 23S rRNA (bridge B1a) and protein L5 of the 50S subunit (bridge B1b), connecting the 2 subunits; these bridges are implicated in subunit movement. Contacts the tRNAs in the A and P-sites. The protein is Small ribosomal subunit protein uS13 of Oleidesulfovibrio alaskensis (strain ATCC BAA-1058 / DSM 17464 / G20) (Desulfovibrio alaskensis).